The chain runs to 320 residues: (+)-corvol ether B synthase/(+)-corvol ether A synthase ((2E,6E)-farnesyl diphosphate cyclizing) (320 aa).

2 residues coordinate Mg(2+): Asp-78 and Asp-83. The DDXXXD motif motif lies at Asp-78–Asp-83. Residue Arg-171 coordinates substrate. The Mg(2+) site is built by Asn-217, Ser-221, and Glu-225.

Belongs to the terpene synthase family. Mg(2+) serves as cofactor.

It catalyses the reaction (2E,6E)-farnesyl diphosphate + H2O = (+)-corvol ether B + diphosphate. The catalysed reaction is (2E,6E)-farnesyl diphosphate + H2O = (+)-corvol ether A + diphosphate. The protein operates within secondary metabolite biosynthesis; terpenoid biosynthesis. Functionally, catalyzes the conversion of (2E,6E)-farnesyl diphosphate (FPP) into (+)-corvol ether A and (+)-corvol ether B via a 1,10-cyclization, which requires isomerization of FPP to nerolidyl diphosphate (NPP) and then abstraction of the pyrophosphate from intermediate NPP leading to a (E,Z)-germacradienyl (helminthogermacradienyl) cation. The preferred substrate is (2E,6E)-farnesyl diphosphate (FPP), however geranyl diphosphate (GPP) is also able to produce small amounts of several acyclic and cyclic monoterpenes, with linalool as the main product. The chain is (+)-corvol ether B synthase/(+)-corvol ether A synthase ((2E,6E)-farnesyl diphosphate cyclizing) from Kitasatospora setae (strain ATCC 33774 / DSM 43861 / JCM 3304 / KCC A-0304 / NBRC 14216 / KM-6054) (Streptomyces setae).